Here is a 322-residue protein sequence, read N- to C-terminus: MIFLPISSIETKTYIFQSIVILVCVLITASIMSVVERRVLGLLQNRYGPNRVGWQGTLQVVADMIKLFFKEDWIPTFSKKITFLIAPILAFISLLLVITIIPLSPSIVIVNLDIGVLFFLMMASLSVYSVLLAGWSSNNKYALLGSIRATAQTLSYEVFLGLSCMGVVARAKSFNMIDIVDSQIGLWNIIPQFFGFLAFFIAGLALCHRHPFDQPESEQELADGYHIEYSSIKFGLFFIGEYISIIVVSSLISTMFFGGWLGPLFPSYFWFILKTLCFMMIFILIRASLPRPRYDKMMLFGWKVCFPLTLINLIFTALIMLY.

Helical transmembrane passes span 15–35 (IFQS…MSVV), 81–101 (ITFL…ITII), 114–134 (IGVL…LLAG), 149–169 (ATAQ…GVVA), 184–204 (IGLW…IAGL), 237–257 (FFIG…TMFF), 265–285 (FPSY…FILI), and 299–319 (LFGW…TALI).

The protein belongs to the complex I subunit 1 family. NDH-1 is composed of 13 different subunits. Subunits NuoA, H, J, K, L, M, N constitute the membrane sector of the complex.

The protein localises to the cell membrane. It carries out the reaction a quinone + NADH + 5 H(+)(in) = a quinol + NAD(+) + 4 H(+)(out). Its function is as follows. NDH-1 shuttles electrons from NADH, via FMN and iron-sulfur (Fe-S) centers, to quinones in the respiratory chain. The immediate electron acceptor for the enzyme in this species is believed to be ubiquinone. Couples the redox reaction to proton translocation (for every two electrons transferred, four hydrogen ions are translocated across the cytoplasmic membrane), and thus conserves the redox energy in a proton gradient. This subunit may bind ubiquinone. The protein is NADH-quinone oxidoreductase subunit H of Buchnera aphidicola subsp. Baizongia pistaciae (strain Bp).